Reading from the N-terminus, the 143-residue chain is Large ribosomal subunit protein uL11 (143 aa).

It belongs to the universal ribosomal protein uL11 family. Part of the ribosomal stalk of the 50S ribosomal subunit. Interacts with L10 and the large rRNA to form the base of the stalk. L10 forms an elongated spine to which L12 dimers bind in a sequential fashion forming a multimeric L10(L12)X complex. In terms of processing, one or more lysine residues are methylated.

Functionally, forms part of the ribosomal stalk which helps the ribosome interact with GTP-bound translation factors. The protein is Large ribosomal subunit protein uL11 of Paraburkholderia xenovorans (strain LB400).